Consider the following 1157-residue polypeptide: Cyclin-dependent kinase 12 (1157 aa).

The segment at 15–540 (SDVSSEDFSD…RSPTSRDLKH (526 aa)) is disordered. Residues 18-32 (SSEDFSDQEAGDLDA) show a composition bias toward acidic residues. The segment covering 55–76 (GRLDAKPDKEGYDNYRSRRAED) has biased composition (basic and acidic residues). Polar residues predominate over residues 85–94 (SRQTSSSEAT). A Phosphothreonine modification is found at threonine 106. Over residues 134 to 162 (RQKRKKQKKEKHKHKSKKKSKKRKKKRAK) the composition is skewed to basic residues. Residues 163–176 (SYSSIDSMSDNDIN) are compositionally biased toward low complexity. At threonine 184 the chain carries Phosphothreonine. A compositionally biased stretch (polar residues) spans 189–215 (PSKSNERTVSAAPSSFTPHNLKESSSP). Phosphoserine is present on residues serine 190 and serine 192. At threonine 217 the chain carries Phosphothreonine. Residues 224 to 255 (PNTNSNYYGESSLETANSALGSNLQVTVTNKQ) show a composition bias toward polar residues. Residues 256–281 (SISNRLRSPPPSSRSSGNGPRFGNSP) are compositionally biased toward low complexity. At serine 280 the chain carries Phosphoserine. The residue at position 283 (threonine 283) is a Phosphothreonine. Phosphoserine is present on residues serine 291, serine 301, and serine 314. Basic and acidic residues predominate over residues 315 to 332 (PHKEDVSAHHRSSHDHGY). The residue at position 353 (serine 353) is a Phosphoserine. The residue at position 365 (threonine 365) is a Phosphothreonine. The segment covering 392–403 (GKYERYSRDRYS) has biased composition (basic and acidic residues). A compositionally biased stretch (low complexity) spans 408–422 (RSPSVQHSRSRQSPS). Polar residues predominate over residues 444–468 (TTVSSTPSHTTRTSKRASGTGTSGD). Residues 473-484 (SPRTSSRYMESS) are compositionally biased toward low complexity. Phosphoserine occurs at positions 487 and 492. Residues 495-508 (HHYHHRRSPRMRQR) are compositionally biased toward basic residues. Low complexity predominate over residues 518–533 (PSSASSESSASRSRSP). Serine 553 carries the post-translational modification Phosphoserine. 2 disordered regions span residues 574-661 (ERQE…ADVP) and 675-782 (PFSA…QRPV). The segment covering 586–603 (GALTINDNSSSVDGNTPN) has biased composition (polar residues). Residues 609 to 623 (SAPGSGTPAAASTTS) are compositionally biased toward low complexity. Polar residues-rich tracts occupy residues 644–656 (NKQNDSVVSNPAS) and 721–731 (VTSSGSANKSV). Residues serine 730, serine 743, serine 747, and serine 755 each carry the phosphoserine modification. The segment covering 746–760 (LSGDDDVIDSPEDFD) has biased composition (acidic residues). The 295-residue stretch at 804–1098 (FEMIAQIGEG…AEDALRSPWL (295 aa)) folds into the Protein kinase domain. ATP contacts are provided by residues 810–818 (IGEGTYGQV), lysine 833, and 891–896 (EYMDHD). Catalysis depends on aspartate 936, which acts as the Proton acceptor. An ATP-binding site is contributed by histidine 1118.

The protein belongs to the protein kinase superfamily. CMGC Ser/Thr protein kinase family. CDC2/CDKX subfamily. In terms of assembly, interacts with cyclin CycK.

Its subcellular location is the nucleus. The protein localises to the chromosome. The catalysed reaction is [DNA-directed RNA polymerase] + ATP = phospho-[DNA-directed RNA polymerase] + ADP + H(+). The enzyme catalyses L-seryl-[protein] + ATP = O-phospho-L-seryl-[protein] + ADP + H(+). It catalyses the reaction L-threonyl-[protein] + ATP = O-phospho-L-threonyl-[protein] + ADP + H(+). In terms of biological role, cyclin-dependent kinase which displays CTD kinase activity: hyperphosphorylates the C-terminal heptapeptide repeat domain (CTD) of the largest RNA polymerase II subunit, thereby acting as a key regulator of transcription elongation. The protein is Cyclin-dependent kinase 12 (Cdk12) of Drosophila melanogaster (Fruit fly).